The sequence spans 401 residues: MEETRRRFVISSVLSVSLIYLCLSTCHVSAFDFGRRQLRFNTDGRFKILQVSDMHYGFGKETQCSDVSPAEFPYCSDLNTTSFLQRTIASEKPDLIVFSGDNVYGLCETSDVAKSMDMAFAPAIESGIPWVAILGNHDQESDMTRETMMKYIMKLPNSLSQVNPPDAWLYQIDGFGNYNLQIEGPFGSPLFFKSILNLYLLDGGSYTKLDGFGYKYDWVKTSQQNWYEHTSKWLEMEHKRWPFPQNSTAPGLVYLHIPMPEFALFNKSTEMTGVRQESTCSPPINSGFFTKLVERGEVKGVFSGHDHVNDFCAELHGINLCYAGGAGYHGYGQVGWARRVRVVEAQLEKTMYGRWGAVDTIKTWKRLDDKNHSLIDTQLLWTKNTTLEPNFGFSCSTIPQH.

Residues 1-30 (MEETRRRFVISSVLSVSLIYLCLSTCHVSA) form the signal peptide. The N-linked (GlcNAc...) asparagine glycan is linked to N79. Residue N197 coordinates substrate. N197 contributes to the Zn(2+) binding site. N-linked (GlcNAc...) asparagine glycosylation occurs at N246. A Zn(2+)-binding site is contributed by H256. A glycan (N-linked (GlcNAc...) asparagine) is linked at N266. H305 serves as a coordination point for Zn(2+). Residue 305-307 (HDH) coordinates substrate. A Fe cation-binding site is contributed by H307. N-linked (GlcNAc...) asparagine glycosylation is found at N371 and N384.

This sequence belongs to the metallophosphoesterase superfamily. Purple acid phosphatase family. As to quaternary structure, homodimer. Requires Fe cation as cofactor. It depends on Zn(2+) as a cofactor. Specifically expressed in flowers.

The protein resides in the secreted. This is Probable inactive purple acid phosphatase 14 (PAP14) from Arabidopsis thaliana (Mouse-ear cress).